The following is a 156-amino-acid chain: Large ribosomal subunit protein uL15 (156 aa).

Basic residues predominate over residues 1–16 (MVRRFKRAVKYRRGSR). Residues 1–35 (MVRRFKRAVKYRRGSRTHGWGRVGQHRKSGGSGGK) are disordered.

It belongs to the universal ribosomal protein uL15 family. In terms of assembly, part of the 50S ribosomal subunit.

Binds to the 23S rRNA. This is Large ribosomal subunit protein uL15 from Pyrobaculum neutrophilum (strain DSM 2338 / JCM 9278 / NBRC 100436 / V24Sta) (Thermoproteus neutrophilus).